Reading from the N-terminus, the 1295-residue chain is Serine protease sat autotransporter (1295 aa).

Residues Met-1–Ala-49 form the signal peptide. A Peptidase S6 domain is found at Asn-51–Glu-300. Active-site charge relay system residues include His-121, Asp-149, and Ser-256. One can recognise an Autotransporter domain in the interval Asp-1029–Phe-1295.

In terms of processing, cleaved to release the mature protein from the outer membrane.

It localises to the periplasm. The protein localises to the secreted. The protein resides in the cell surface. Its subcellular location is the cell outer membrane. Inhibited by phenylmethylsulfonyl fluoride and Pefabloc. In terms of biological role, shows serine protease activity and displays cytophatic activity, including elongation, rounding, and detachment of a proportion of the cells from monolayer in culture. Triggers vacuolation within the cytoplasm of the human bladder and kidney cells. The chain is Serine protease sat autotransporter (sat) from Escherichia coli O6:H1 (strain CFT073 / ATCC 700928 / UPEC).